A 109-amino-acid chain; its full sequence is uncharacterized protein (109 aa).

Positions 1–22 are cleaved as a signal peptide; it reads MKPYSTLFLFTLLTLTTVPAQA. Residues 39 to 109 form a disordered region; that stretch reads AYNPDHGRDY…ERRMEDEYGQ (71 aa). Residues 41-109 are compositionally biased toward basic and acidic residues; the sequence is NPDHGRDYED…ERRMEDEYGQ (69 aa).

This is an uncharacterized protein from Shigella dysenteriae serotype 1 (strain Sd197).